We begin with the raw amino-acid sequence, 66 residues long: Large ribosomal subunit protein eL24 (66 aa).

Zn(2+) contacts are provided by Cys-6, Cys-9, Cys-32, and Cys-36. The segment at 6 to 36 (CSFCGKSIEPASGFLYVRKDGSVLNFCSRKC) adopts a C4-type zinc-finger fold.

The protein belongs to the eukaryotic ribosomal protein eL24 family. In terms of assembly, part of the 50S ribosomal subunit. Forms a cluster with proteins L3 and L14. Requires Zn(2+) as cofactor.

Functionally, binds to the 23S rRNA. This chain is Large ribosomal subunit protein eL24, found in Picrophilus torridus (strain ATCC 700027 / DSM 9790 / JCM 10055 / NBRC 100828 / KAW 2/3).